Here is a 210-residue protein sequence, read N- to C-terminus: Large ribosomal subunit protein uL4 (210 aa).

Positions 56 to 80 are disordered; sequence FVSGGGKKPWRQKGTGRARAGSTRS.

Belongs to the universal ribosomal protein uL4 family. As to quaternary structure, part of the 50S ribosomal subunit.

In terms of biological role, one of the primary rRNA binding proteins, this protein initially binds near the 5'-end of the 23S rRNA. It is important during the early stages of 50S assembly. It makes multiple contacts with different domains of the 23S rRNA in the assembled 50S subunit and ribosome. Forms part of the polypeptide exit tunnel. The protein is Large ribosomal subunit protein uL4 of Solidesulfovibrio magneticus (strain ATCC 700980 / DSM 13731 / RS-1) (Desulfovibrio magneticus).